The primary structure comprises 402 residues: Ketol-acid reductoisomerase, mitochondrial (402 aa).

Residues 1-26 (MAARNCTKALRPLARQLATPAVQRRT) constitute a mitochondrion transit peptide. The KARI N-terminal Rossmann domain maps to 63–252 (KEEVHERADW…AVGSGYLYET (190 aa)). NADP(+) is bound by residues 90-99 (GYGSQGHGQG), 114-119 (RKNGKS), and 152-156 (SDAAQ). Residue histidine 177 is part of the active site. In terms of domain architecture, KARI C-terminal knotted spans 253-400 (TFEKEVYSDL…KAVRSLRPEN (148 aa)). Residues aspartate 261, glutamate 265, glutamate 297, and glutamate 301 each contribute to the Mg(2+) site. Serine 323 provides a ligand contact to substrate.

The protein belongs to the ketol-acid reductoisomerase family. The cofactor is Mg(2+).

It localises to the mitochondrion. The enzyme catalyses (2R)-2,3-dihydroxy-3-methylbutanoate + NADP(+) = (2S)-2-acetolactate + NADPH + H(+). It catalyses the reaction (2R,3R)-2,3-dihydroxy-3-methylpentanoate + NADP(+) = (S)-2-ethyl-2-hydroxy-3-oxobutanoate + NADPH + H(+). It functions in the pathway amino-acid biosynthesis; L-isoleucine biosynthesis; L-isoleucine from 2-oxobutanoate: step 2/4. Its pathway is amino-acid biosynthesis; L-valine biosynthesis; L-valine from pyruvate: step 2/4. The protein is Ketol-acid reductoisomerase, mitochondrial (ilv-2) of Neurospora crassa (strain ATCC 24698 / 74-OR23-1A / CBS 708.71 / DSM 1257 / FGSC 987).